Reading from the N-terminus, the 336-residue chain is MNTEATHDQNEAQTTGVRLRNAREQLGLSQQAVAERLCLKVSTVRDIEEDKAPSDLASTFLRGYIRSYARLVHVPEEELLPGLEKQAPLRAAKVAPMQSFSLGKRRKKRDGWLMSFTWLVLFVVVGLTGAWWWQNHKAQQEEITTMADQSTAELNADKDSGQSVPLDTGAVTSQDTTPAQTAPAPATPVDSTAATQTQTPAPTAAATQNTVVAPSQANVDTAATSAAPAATETPSALPTSQAGVAAPAADPNALVMNFTADCWLEVTDATGKKLFSGMQRKDGNLNLTGQAPYKLKIGAPAAVQIQYQGKPVDLSRFIRTNQVARLTLNAEPTPAQ.

The Cytoplasmic segment spans residues 1 to 111 (MNTEATHDQN…LGKRRKKRDG (111 aa)). Positions 19–71 (LRNAREQLGLSQQAVAERLCLKVSTVRDIEEDKAPSDLASTFLRGYIRSYARL) constitute an HTH cro/C1-type domain. Residues 30–49 (QQAVAERLCLKVSTVRDIEE) constitute a DNA-binding region (H-T-H motif). Residues 112-132 (WLMSFTWLVLFVVVGLTGAWW) form a helical; Signal-anchor for type II membrane protein membrane-spanning segment. The Periplasmic segment spans residues 133–336 (WQNHKAQQEE…TLNAEPTPAQ (204 aa)). A disordered region spans residues 155-243 (NADKDSGQSV…PSALPTSQAG (89 aa)). Polar residues predominate over residues 161 to 175 (GQSVPLDTGAVTSQD). Low complexity-rich tracts occupy residues 176-214 (TTPA…VVAP) and 221-243 (TAAT…SQAG).

This sequence belongs to the RodZ family.

The protein localises to the cell inner membrane. Cytoskeletal protein that is involved in cell-shape control through regulation of the length of the long axis. In Salmonella newport (strain SL254), this protein is Cytoskeleton protein RodZ.